A 139-amino-acid chain; its full sequence is uncharacterized protein (139 aa).

This is an uncharacterized protein from Dictyostelium discoideum (Social amoeba).